The following is a 550-amino-acid chain: Arginine--tRNA ligase (550 aa).

The short motif at 130–140 (ANPTGPIHIGG) is the 'HIGH' region element.

It belongs to the class-I aminoacyl-tRNA synthetase family. In terms of assembly, monomer.

It localises to the cytoplasm. It catalyses the reaction tRNA(Arg) + L-arginine + ATP = L-arginyl-tRNA(Arg) + AMP + diphosphate. The polypeptide is Arginine--tRNA ligase (Mycobacterium ulcerans (strain Agy99)).